We begin with the raw amino-acid sequence, 222 residues long: Kinetochore protein Spc25 (222 aa).

The stretch at 51–86 (RHQRKVGKLQKVLMERREELDKRVSFIEELDRELEA) forms a coiled coil.

Belongs to the SPC25 family. In terms of assembly, component of the Ndc80 complex, which is composed of Ndc80, Nuf2 and Spc25.

Its subcellular location is the nucleus. The protein localises to the chromosome. The protein resides in the centromere. It localises to the kinetochore. Functionally, acts as a component of the essential kinetochore-associated Ndc80 complex, which is required for chromosome segregation and spindle checkpoint activity during meiosis and mitosis. Required for kinetochore integrity and the organization of stable microtubule binding sites in the outer plate of the kinetochore. Participates in SAC signaling that responds specifically to disruptions in spindle microtubule dynamics. The NDC80 complex synergistically enhances the affinity of the SKA1 complex for microtubules and may allow the NDC80 complex to track depolymerizing microtubules. The chain is Kinetochore protein Spc25 from Drosophila simulans (Fruit fly).